Consider the following 182-residue polypeptide: Adenine phosphoribosyltransferase (182 aa).

This sequence belongs to the purine/pyrimidine phosphoribosyltransferase family. As to quaternary structure, homodimer.

The protein resides in the cytoplasm. The catalysed reaction is AMP + diphosphate = 5-phospho-alpha-D-ribose 1-diphosphate + adenine. It participates in purine metabolism; AMP biosynthesis via salvage pathway; AMP from adenine: step 1/1. Catalyzes a salvage reaction resulting in the formation of AMP, that is energically less costly than de novo synthesis. In Sulfurimonas denitrificans (strain ATCC 33889 / DSM 1251) (Thiomicrospira denitrificans (strain ATCC 33889 / DSM 1251)), this protein is Adenine phosphoribosyltransferase.